The chain runs to 336 residues: F420-dependent glucose-6-phosphate dehydrogenase (336 aa).

Aspartate 39 is a coenzyme F420-(gamma-Glu)n binding site. Catalysis depends on histidine 40, which acts as the Proton donor. Residues threonine 76 and 107-108 (TG) each bind coenzyme F420-(gamma-Glu)n. The Proton acceptor role is filled by glutamate 109. Coenzyme F420-(gamma-Glu)n contacts are provided by residues asparagine 112, 177–178 (GG), and 180–181 (QV). Positions 195, 198, 259, and 283 each coordinate substrate.

Belongs to the F420-dependent glucose-6-phosphate dehydrogenase family. In terms of assembly, homodimer.

It carries out the reaction oxidized coenzyme F420-(gamma-L-Glu)(n) + D-glucose 6-phosphate + H(+) = 6-phospho-D-glucono-1,5-lactone + reduced coenzyme F420-(gamma-L-Glu)(n). Its function is as follows. Catalyzes the coenzyme F420-dependent oxidation of glucose 6-phosphate (G6P) to 6-phosphogluconolactone. Appears to have a role in resistance to oxidative stress, via its consumption of G6P that serves as a source of reducing power to combat oxidative stress in mycobacteria. In Mycolicibacterium gilvum (strain PYR-GCK) (Mycobacterium gilvum (strain PYR-GCK)), this protein is F420-dependent glucose-6-phosphate dehydrogenase.